Here is a 228-residue protein sequence, read N- to C-terminus: MGQKVHPTGIRLGIVKEHTSVWYADGRTYADYLLADLNVREYLQDKLKSASVSRIDIHRPAQTARITIHTARPGIVIGKKGEDVEKLRQDLTKQMGVPVHINIEEIRKPELDAMLVAQSVAQQLERRVMFRRAMKRAVQNAMRIGAKGIKIQVSGRLGGAEIARTEWYREGRVPLHTLRADIDYNTYEAHTTYGVIGVKVWIFKGEVIGGRHEELKPQAPAPRKKAAK.

The region spanning 39–107 (VREYLQDKLK…PVHINIEEIR (69 aa)) is the KH type-2 domain.

The protein belongs to the universal ribosomal protein uS3 family. In terms of assembly, part of the 30S ribosomal subunit. Forms a tight complex with proteins S10 and S14.

Functionally, binds the lower part of the 30S subunit head. Binds mRNA in the 70S ribosome, positioning it for translation. The polypeptide is Small ribosomal subunit protein uS3 (Stutzerimonas stutzeri (strain A1501) (Pseudomonas stutzeri)).